A 706-amino-acid chain; its full sequence is Glycylpeptide N-tetradecanoyltransferase (706 aa).

The interval 1–119 (MSGIAGTSQD…LASGSSREGK (119 aa)) is disordered. Residues 7–42 (TSQDTSVAASASSSSTRPAAASSSIAPPSPSLTTAP) are compositionally biased toward low complexity. The segment covering 47-65 (EQDDDDDQENDDEEEEEEG) has biased composition (acidic residues). Residues 78–95 (KQRKKKKSKAAAKLRKKL) are compositionally biased toward basic residues. Residues 180–183 (HKFW), 317–319 (LCV), and 325–329 (SKRLA) contribute to the tetradecanoyl-CoA site. The active-site Proton acceptor; via carboxylate is valine 706.

It belongs to the NMT family. Monomer.

The protein resides in the cytoplasm. The catalysed reaction is N-terminal glycyl-[protein] + tetradecanoyl-CoA = N-tetradecanoylglycyl-[protein] + CoA + H(+). Its function is as follows. Adds a myristoyl group to the N-terminal glycine residue of certain cellular proteins. In Mycosarcoma maydis (Corn smut fungus), this protein is Glycylpeptide N-tetradecanoyltransferase (NMT1).